Consider the following 603-residue polypeptide: PEEICTLVIAESFPEDAGIFTCSARNDYGSVTSTAQLVVTSANTENCSYDSMGEPNSDHFQHFPPPPPILETGSYELASQKPSEIQQVNTPNLGFNMAALQMQFNSAERETNGVHPSHGVNGLINGKAYGNKSPPTPAALLSPTKEPPPLLAKPKLGFPKKASRTARIASDEEIQGTKDAVIQDLERKLRFKEDLLNNGQPRLTYEERMARRLLGADSANVFNIQEPEETAANQEYKVSSCEQRLISEIEYRLERSPVEESGDEVQEAEVPVENAAAPFFEMKLKHYKIFEGMPVTFTCRVAGSPKPKIYWFKDGKQISPKSDHYTIQRDVDGTCSLHTTASTLDDDGNYTIMAANTQGRVSCTGRLMVQAVNQRGRSPRSPPGHPHARRPRSRSRDSGDENEPIQERFFRPHFLQAPGDLTVQEGKLCRMDCKVSGLPTPDLSWQLDGKPIRPDSAHKMLVRENGVHSLIIEPVTSRDAGIYTCIATNRAGQNSFNLELVVAAKEAHKAPVFIEKLQNTGVADGYPVRLECRVSGVPPPQIFWKKENESLTHSTDRVSMHQDNHGYICLLIQGATKEDAGWYTVSAKNEAGIVSCTARLDVY.

The interval 63-67 (FPPPP) is interaction with VASP. S133 bears the Phosphoserine mark. The disordered stretch occupies residues 134–156 (PPTPAALLSPTKEPPPLLAKPKL). T136 bears the Phosphothreonine mark. Residues S142, S170, S256, and S261 each carry the phosphoserine modification. The Ig-like C2-type 1 domain maps to 278 to 362 (PFFEMKLKHY…MAANTQGRVS (85 aa)). A disordered region spans residues 373–402 (NQRGRSPRSPPGHPHARRPRSRSRDSGDEN). Residues S378, S381, and S393 each carry the phosphoserine modification. Residue S395 is modified to Phosphoserine; by PKB/AKT1. S398 carries the post-translational modification Phosphoserine. Ig-like C2-type domains follow at residues 412-503 (PHFL…LVVA) and 511-601 (PVFI…ARLD). Interaction with EZR stretches follow at residues 414–503 (FLQA…LVVA) and 513–603 (FIEK…LDVY). A disulfide bond links C433 and C485.

This sequence belongs to the myotilin/palladin family. In terms of assembly, interacts with EPS8. Interacts with LASP1. Interacts with VASP. Interacts with ACTN. Interacts with SORBS2. Interacts with PFN1. Interacts with LPP. Interacts with SPIN90. Interacts with SRC. Interacts with EZR. Interacts with RAI14. Post-translationally, phosphorylated predominantly on serines and, to a lesser extent, on tyrosines. Phosphorylation at Ser-395 by PKB/AKT1 modulates cytoskeletal organization and cell motility. As to expression, in adult central nervous system is detected in the brain and spinal cord, specially in the olfactory bulb, cerebral and cerebellar cortices, hippocampus, amygdala, superior colluculus, and superficial laminae of the spinal dorsal horn.

Its subcellular location is the cytoplasm. The protein resides in the cytoskeleton. It localises to the cell junction. The protein localises to the focal adhesion. It is found in the myofibril. Its subcellular location is the sarcomere. The protein resides in the z line. It localises to the cell projection. The protein localises to the ruffle. It is found in the podosome. Its subcellular location is the lamellipodium. The protein resides in the axon. It localises to the growth cone. Cytoskeletal protein required for organization of normal actin cytoskeleton. Roles in establishing cell morphology, motility, cell adhesion and cell-extracellular matrix interactions in a variety of cell types. May function as a scaffolding molecule with the potential to influence both actin polymerization and the assembly of existing actin filaments into higher-order arrays. Binds to proteins that bind to either monomeric or filamentous actin. Localizes at sites where active actin remodeling takes place, such as lamellipodia and membrane ruffles. Different isoforms may have functional differences. Plays a role in neurite outgrowth and in the establishment of polarity during neuronal morphogenesis. Participates in the acquisition of the reactive astrocyte morphology. The chain is Palladin (Palld) from Rattus norvegicus (Rat).